Consider the following 185-residue polypeptide: Lactoylglutathione lyase (185 aa).

The segment at 1–21 (MASEAKESPANNPGLSTVRDE) is disordered. A VOC domain is found at 27–174 (IMQQTMFRVK…DGYWIEIFDL (148 aa)). Positions 30 and 34 each coordinate substrate. Gln-30 contributes to the Zn(2+) binding site. Residue Glu-96 participates in Zn(2+) binding. Substrate-binding positions include Asn-100, Arg-120, His-124, and 154 to 155 (KM). His-124 serves as a coordination point for Zn(2+). Residue Glu-170 coordinates Zn(2+). The active-site Proton donor/acceptor is the Glu-170.

Belongs to the glyoxalase I family. It depends on Zn(2+) as a cofactor.

The catalysed reaction is (R)-S-lactoylglutathione = methylglyoxal + glutathione. It participates in secondary metabolite metabolism; methylglyoxal degradation; (R)-lactate from methylglyoxal: step 1/2. Its function is as follows. Catalyzes the conversion of hemimercaptal, formed from methylglyoxal and glutathione, to S-lactoylglutathione. The polypeptide is Lactoylglutathione lyase (GLY I) (Brassica juncea (Indian mustard)).